A 453-amino-acid chain; its full sequence is Ribulose bisphosphate carboxylase large chain (453 aa).

Positions 1–2 (MS) are excised as a propeptide. Pro3 carries the N-acetylproline modification. Lys14 bears the N6,N6,N6-trimethyllysine mark. The substrate site is built by Asn123 and Thr173. Lys175 acts as the Proton acceptor in catalysis. A substrate-binding site is contributed by Lys177. Lys201, Asp203, and Glu204 together coordinate Mg(2+). An N6-carboxylysine modification is found at Lys201. The active-site Proton acceptor is the His294. Substrate is bound by residues Arg295, His327, and Ser379.

It belongs to the RuBisCO large chain family. Type I subfamily. Heterohexadecamer of 8 large chains and 8 small chains; disulfide-linked. The disulfide link is formed within the large subunit homodimers. It depends on Mg(2+) as a cofactor. Post-translationally, the disulfide bond which can form in the large chain dimeric partners within the hexadecamer appears to be associated with oxidative stress and protein turnover.

The protein localises to the plastid. Its subcellular location is the chloroplast. The catalysed reaction is 2 (2R)-3-phosphoglycerate + 2 H(+) = D-ribulose 1,5-bisphosphate + CO2 + H2O. It catalyses the reaction D-ribulose 1,5-bisphosphate + O2 = 2-phosphoglycolate + (2R)-3-phosphoglycerate + 2 H(+). Its function is as follows. RuBisCO catalyzes two reactions: the carboxylation of D-ribulose 1,5-bisphosphate, the primary event in carbon dioxide fixation, as well as the oxidative fragmentation of the pentose substrate in the photorespiration process. Both reactions occur simultaneously and in competition at the same active site. The polypeptide is Ribulose bisphosphate carboxylase large chain (Crucianella angustifolia (Narrow-leaved crosswort)).